The primary structure comprises 391 residues: Probable inactive allantoicase (391 aa).

The protein belongs to the allantoicase family.

The function of this enzyme is unclear as allantoicase activity is not known to exist in mammals. The polypeptide is Probable inactive allantoicase (Homo sapiens (Human)).